The primary structure comprises 111 residues: MSDILSELHQVLESRKGANPDSSYVASLYAKGLNKILEKVGEEAIETILAARDAEVSGEHQALISETADLWFHSLVMLAKLGEHPDKVLAELQRRFGLSGHDEKAARSGKH.

The protein belongs to the PRA-PH family.

The protein resides in the cytoplasm. The catalysed reaction is 1-(5-phospho-beta-D-ribosyl)-ATP + H2O = 1-(5-phospho-beta-D-ribosyl)-5'-AMP + diphosphate + H(+). It functions in the pathway amino-acid biosynthesis; L-histidine biosynthesis; L-histidine from 5-phospho-alpha-D-ribose 1-diphosphate: step 2/9. The polypeptide is Phosphoribosyl-ATP pyrophosphatase (Alcanivorax borkumensis (strain ATCC 700651 / DSM 11573 / NCIMB 13689 / SK2)).